A 281-amino-acid chain; its full sequence is MAFQMVTQYAHSPEDIDHYNTDELRQQFLMAEIFVPGDIRLTYTYNDRMIFGGVTPTTTPLEIKLDQQLGVDYFLQRRELGFINIGGAGTVTIDGTTSDVAPHDGYYISMGTQSVIFASTDAKHPAKFYVVSTPAHRAYPSKQLAFKDTLAMPMGDQAHMNKRTIYKYIDASTMATCQLQMGYTVLAPGNSWNTMPAHTHARRMETYLYTEFGDPNTRVAHFLGTPENTKHIWLEPDQAVVNPSYSIHCGVGTTNYAFIWAMCGENQTYDDMDAVDMHDLR.

Zn(2+) contacts are provided by histidine 198, histidine 200, glutamate 205, and histidine 248.

Belongs to the KduI family. Requires Zn(2+) as cofactor.

It carries out the reaction 5-dehydro-4-deoxy-D-glucuronate = 3-deoxy-D-glycero-2,5-hexodiulosonate. Its pathway is glycan metabolism; pectin degradation; 2-dehydro-3-deoxy-D-gluconate from pectin: step 4/5. In terms of biological role, catalyzes the isomerization of 5-dehydro-4-deoxy-D-glucuronate to 3-deoxy-D-glycero-2,5-hexodiulosonate. The sequence is that of 4-deoxy-L-threo-5-hexosulose-uronate ketol-isomerase from Levilactobacillus brevis (strain ATCC 367 / BCRC 12310 / CIP 105137 / JCM 1170 / LMG 11437 / NCIMB 947 / NCTC 947) (Lactobacillus brevis).